The primary structure comprises 285 residues: (3S)-malyl-CoA thioesterase (285 aa).

Residues Arg-70 and Glu-122 each contribute to the substrate site. Mg(2+) is bound by residues Glu-122 and Asp-148.

Belongs to the HpcH/HpaI aldolase family. In terms of assembly, homodimer or homotrimer. The cofactor is Mg(2+).

The catalysed reaction is (S)-malyl-CoA + H2O = (S)-malate + CoA + H(+). Reversibly inhibited by EDTA. Stimulated by the divalent cations Mg(2+) and Mn(2+). In terms of biological role, catalyzes the hydrolysis of (3S)-malyl-CoA to (3S)-malate and free CoA. Inactive towards beta-methylmalyl-CoA and other CoA esters. In Cereibacter sphaeroides (strain ATCC 17023 / DSM 158 / JCM 6121 / CCUG 31486 / LMG 2827 / NBRC 12203 / NCIMB 8253 / ATH 2.4.1.) (Rhodobacter sphaeroides), this protein is (3S)-malyl-CoA thioesterase.